Here is a 254-residue protein sequence, read N- to C-terminus: Probable pectate lyase E (254 aa).

An N-terminal signal peptide occupies residues 1–17; sequence MYQPLLLLPLLLTSAFA. N175 is a glycosylation site (N-linked (GlcNAc...) asparagine). The disordered stretch occupies residues 228–254; that stretch reads DNNKKEPAKKSSGPSNACKYKEPLASC.

Belongs to the polysaccharide lyase 3 family. Requires Ca(2+) as cofactor.

The protein localises to the secreted. It carries out the reaction Eliminative cleavage of (1-&gt;4)-alpha-D-galacturonan to give oligosaccharides with 4-deoxy-alpha-D-galact-4-enuronosyl groups at their non-reducing ends.. In terms of biological role, pectinolytic enzyme consist of four classes of enzymes: pectin lyase, polygalacturonase, pectin methylesterase and rhamnogalacturonase. Among pectinolytic enzymes, pectin lyase is the most important in depolymerization of pectin, since it cleaves internal glycosidic bonds of highly methylated pectins. Favors pectate, the anion, over pectin, the methyl ester. This is Probable pectate lyase E (plyE) from Aspergillus fumigatus (strain ATCC MYA-4609 / CBS 101355 / FGSC A1100 / Af293) (Neosartorya fumigata).